Reading from the N-terminus, the 403-residue chain is MANIVVKKLNSTPIEELPVEIVERKGIGHPDSICDGIAEAVSVALCKMYKEKMGAVLHHNTDQVELVGGYAYPSLGGGDIVNPIYVLLSGRATTEVFDKEKCETIRLPVGTVAVNAAREYIKNTIINLDVEKDIVVDCRIGQGSVDLVGVFDRENSIPLANDTSFGVGHAPFSTTENLVLKTEQLLNSKEIKKEIPAIGEDIKVMGLREGKKITLTIAMATVDKYVNSVEEYEEIKAKAKAKVEELAKEYADGYEIEVFVNTADSDNCIFLTVSGTSAEMGDDGSVGRGNRANGLITPFRPMSMEATSGKNPINHIGKLYNILANIIANDVAKIEGVNECHVRILSQIGKPVNEPKILDIELITDEGYDVADIEPKANEIAEYWLNNIEEVREKLMTGEIKTF.

141-146 (GQGSVD) lines the ATP pocket.

Belongs to the AdoMet synthase 2 family. Mg(2+) is required as a cofactor.

It catalyses the reaction L-methionine + ATP + H2O = S-adenosyl-L-methionine + phosphate + diphosphate. It participates in amino-acid biosynthesis; S-adenosyl-L-methionine biosynthesis; S-adenosyl-L-methionine from L-methionine: step 1/1. Functionally, catalyzes the formation of S-adenosylmethionine from methionine and ATP. This Methanococcus aeolicus (strain ATCC BAA-1280 / DSM 17508 / OCM 812 / Nankai-3) protein is S-adenosylmethionine synthase.